A 969-amino-acid chain; its full sequence is Lateral signaling target protein 2 homolog (969 aa).

Lys-87 participates in a covalent cross-link: Glycyl lysine isopeptide (Lys-Gly) (interchain with G-Cter in ubiquitin). Disordered stretches follow at residues 290–323 (QDGEFPTSSTNDPSASTGPDSQTEELEKEKGVEE), 336–360 (SVWKEEEEKQVLPESSSESEEEEPI), 390–437 (STLL…YHDD), and 715–777 (RSEC…DMSE). Residues 295-310 (PTSSTNDPSASTGPDS) show a composition bias toward polar residues. A compositionally biased stretch (basic and acidic residues) spans 336–346 (SVWKEEEEKQV). The segment covering 391 to 402 (TLLSPPSQNQSP) has biased composition (polar residues). Residues 411–423 (GSSLEGSSATSST) show a composition bias toward low complexity. Over residues 715 to 729 (RSECFGKQSKDDNRK) the composition is skewed to basic and acidic residues. 2 stretches are compositionally biased toward low complexity: residues 732–745 (SSSQESPLSSVPSS) and 756–769 (SLSSSYAPSPVSSL). An FYVE-type zinc finger spans residues 899–959 (DEACNSCIAC…VCTHCYMFHV (61 aa)). Residues Cys-905, Cys-908, Cys-921, Cys-924, Cys-929, Cys-932, Cys-951, and Cys-954 each coordinate Zn(2+).

It belongs to the lst-2 family. In terms of processing, monoubiquitination at Lys-87 prevents binding to phosphatidylinositol 3-phosphate (PI3P) and localization to early endosome membranes.

Its subcellular location is the cytoplasm. It localises to the cytosol. The protein localises to the early endosome membrane. In terms of biological role, negative regulator of epidermal growth factor receptor (EGFR) signaling. Acts by promoting EGFR degradation in endosomes when not monoubiquitinated. The polypeptide is Lateral signaling target protein 2 homolog (zfyve28) (Danio rerio (Zebrafish)).